The chain runs to 318 residues: HTH-type transcriptional regulatory protein TyrR (318 aa).

Residues 15 to 239 (FIVQSEAMKS…LYNTLYRACS (225 aa)) enclose the Sigma-54 factor interaction; truncated domain. ATP contacts are provided by residues 43–50 (GETGSGKD) and 101–110 (ANKGTVLLDG). Residues 292–312 (STRKLAQRLGVSHTAIANKLK) constitute a DNA-binding region (H-T-H motif).

As to quaternary structure, homodimer. In presence of tyrosine (or high concentrations of phenylalanine or tryptophan) and ATP, it self-associates to form a hexamer.

It localises to the cytoplasm. With respect to regulation, the DNA binding ability is drastically reduced in the presence of ATP. Tyrosine further reduces the binding affinity of TyrR in the presence of ATP. Functionally, transcriptional regulator of the TyrR regulon, which includes a number of genes coding for proteins involved in the biosynthesis or transport of the three aromatic amino acids, phenylalanine, tyrosine and tryptophan. These three aromatic amino acids act as effectors which bind to the TyrR protein to form an active regulatory protein. Acts by binding specifically to TyrR boxes in the promoter region of the target genes. Can efficiently repress the transcription of the aroF promoter, but lacks the ability to function as a transcriptional activator. The chain is HTH-type transcriptional regulatory protein TyrR from Haemophilus influenzae (strain ATCC 51907 / DSM 11121 / KW20 / Rd).